The following is a 426-amino-acid chain: 3-phosphoshikimate 1-carboxyvinyltransferase (426 aa).

3 residues coordinate 3-phosphoshikimate: lysine 22, serine 23, and arginine 27. Position 22 (lysine 22) interacts with phosphoenolpyruvate. Residues glycine 96 and arginine 124 each contribute to the phosphoenolpyruvate site. The 3-phosphoshikimate site is built by serine 170, serine 171, glutamine 172, serine 198, aspartate 314, asparagine 337, and lysine 341. Residue glutamine 172 participates in phosphoenolpyruvate binding. Aspartate 314 acts as the Proton acceptor in catalysis. 3 residues coordinate phosphoenolpyruvate: arginine 345, arginine 387, and lysine 412.

Belongs to the EPSP synthase family. Monomer.

It is found in the cytoplasm. It catalyses the reaction 3-phosphoshikimate + phosphoenolpyruvate = 5-O-(1-carboxyvinyl)-3-phosphoshikimate + phosphate. It participates in metabolic intermediate biosynthesis; chorismate biosynthesis; chorismate from D-erythrose 4-phosphate and phosphoenolpyruvate: step 6/7. Its function is as follows. Catalyzes the transfer of the enolpyruvyl moiety of phosphoenolpyruvate (PEP) to the 5-hydroxyl of shikimate-3-phosphate (S3P) to produce enolpyruvyl shikimate-3-phosphate and inorganic phosphate. The sequence is that of 3-phosphoshikimate 1-carboxyvinyltransferase from Aliivibrio fischeri (strain ATCC 700601 / ES114) (Vibrio fischeri).